A 104-amino-acid chain; its full sequence is Nucleoid-associated protein GAU_1113 (104 aa).

This sequence belongs to the YbaB/EbfC family. In terms of assembly, homodimer.

It is found in the cytoplasm. It localises to the nucleoid. Binds to DNA and alters its conformation. May be involved in regulation of gene expression, nucleoid organization and DNA protection. This Gemmatimonas aurantiaca (strain DSM 14586 / JCM 11422 / NBRC 100505 / T-27) protein is Nucleoid-associated protein GAU_1113.